Here is a 160-residue protein sequence, read N- to C-terminus: Lipoprotein signal peptidase (160 aa).

3 helical membrane-spanning segments follow: residues 13-33, 72-92, and 104-124; these read IYIT…HLII, WFLS…ITKL, and SLII…GFVV. Active-site residues include Asp-125 and Asp-143. Residues 134-154 form a helical membrane-spanning segment; it reads WHFATFNIADCSIFIGIIILM.

Belongs to the peptidase A8 family.

Its subcellular location is the cell inner membrane. It catalyses the reaction Release of signal peptides from bacterial membrane prolipoproteins. Hydrolyzes -Xaa-Yaa-Zaa-|-(S,diacylglyceryl)Cys-, in which Xaa is hydrophobic (preferably Leu), and Yaa (Ala or Ser) and Zaa (Gly or Ala) have small, neutral side chains.. It functions in the pathway protein modification; lipoprotein biosynthesis (signal peptide cleavage). In terms of biological role, this protein specifically catalyzes the removal of signal peptides from prolipoproteins. This chain is Lipoprotein signal peptidase, found in Buchnera aphidicola subsp. Acyrthosiphon pisum (strain Tuc7).